The primary structure comprises 452 residues: Mitochondrial import inner membrane translocase subunit TIM44 (452 aa).

Thr128 bears the Phosphothreonine mark. 166–173 (GGEKLGRT) contacts ATP. The residue at position 180 (Ser180) is a Phosphoserine. Lys217 carries the N6-succinyllysine modification.

It belongs to the Tim44 family. Probable component of the PAM complex at least composed of a mitochondrial HSP70 protein, GRPEL1 or GRPEL2, TIMM44, TIMM16/PAM16 and TIMM14/DNAJC19. The complex interacts with the TIMM23 component of the TIM23 complex. Interacts with SLC25A4/ANT1 and SLC25A5/ANT2; leading to inhibit the presequence translocase TIMM23, thereby promoting stabilization of PINK1.

The protein resides in the mitochondrion inner membrane. It localises to the mitochondrion matrix. In terms of biological role, essential component of the PAM complex, a complex required for the translocation of transit peptide-containing proteins from the inner membrane into the mitochondrial matrix in an ATP-dependent manner. Recruits mitochondrial HSP70 to drive protein translocation into the matrix using ATP as an energy source. This chain is Mitochondrial import inner membrane translocase subunit TIM44 (TIMM44), found in Homo sapiens (Human).